The following is a 1134-amino-acid chain: Tyrosine-protein kinase receptor Tie-1 (1134 aa).

The N-terminal stretch at 1–22 (MVWWGSSLLLPTLFLASHVGAS) is a signal peptide. Over 23–755 (VDLTLLANLR…SRAAEEGLDQ (733 aa)) the chain is Extracellular. The Ig-like C2-type 1 domain maps to 43 to 123 (CVSGEAGAGR…VLYVHNSPGA (81 aa)). 2 N-linked (GlcNAc...) asparagine glycosylation sites follow: N81 and N159. EGF-like domains are found at residues 212–254 (GCGA…TRCE), 256–301 (ACRE…SQCQ), and 303–343 (ACAP…VHCE). Cystine bridges form between C226-C235, C229-C242, C244-C253, C266-C276, C270-C289, C291-C300, C313-C325, C319-C331, and C333-C342. Residues 349–440 (PQILSMATEV…GQDSRRFKVN (92 aa)) enclose the Ig-like C2-type 2 domain. Fibronectin type-III domains lie at 444–543 (PPVP…CPEP), 546–638 (QPWL…LPPS), and 642–736 (APRH…LGNG). Residues N501, N592, and N705 are each glycosylated (N-linked (GlcNAc...) asparagine). A helical membrane pass occupies residues 756-780 (QLVLAVVGSVSATCLTILAALLALV). Topologically, residues 781 to 1134 (CIRRSCLHRR…AGIDATAEEA (354 aa)) are cytoplasmic. Positions 835–1114 (ITFEDLIGEG…RMLEARKAYV (280 aa)) constitute a Protein kinase domain. ATP contacts are provided by residues 841 to 849 (IGEGNFGQV) and K866. The active-site Proton acceptor is the D975. Position 1003 is a phosphotyrosine; by autocatalysis (Y1003).

It belongs to the protein kinase superfamily. Tyr protein kinase family. Tie subfamily. In terms of assembly, heterodimer with TEK/TIE2. Interacts with SVEP1 (via C-terminus). In terms of processing, phosphorylated on tyrosine residues in response to ANGPT1, most likely by TEK/TIE2. Specifically expressed in developing vascular endothelial cells. Abundantly expressed in lung and heart, moderately in brain, liver and kidney, and weakly in thymus, spleen and testis.

The protein localises to the cell membrane. It catalyses the reaction L-tyrosyl-[protein] + ATP = O-phospho-L-tyrosyl-[protein] + ADP + H(+). Its function is as follows. Transmembrane tyrosine-protein kinase that may modulate TEK/TIE2 activity and contribute to the regulation of angiogenesis. The chain is Tyrosine-protein kinase receptor Tie-1 (Tie1) from Mus musculus (Mouse).